Here is a 626-residue protein sequence, read N- to C-terminus: Transketolase-like protein 2 (626 aa).

His37 is a substrate binding site. Residues Ser40, His77, and 123–125 (GSL) contribute to the thiamine diphosphate site. Asp155 contacts Mg(2+). Gly156 and Asn185 together coordinate thiamine diphosphate. Mg(2+)-binding residues include Asn185 and Leu187. Lys247 and His261 together coordinate thiamine diphosphate. Residues His261 and Ser348 each coordinate substrate. Residues Glu369 and Phe395 each contribute to the thiamine diphosphate site. Glu369 (proton donor) is an active-site residue. His419 and Asp427 together coordinate substrate. Gln431 contacts thiamine diphosphate. Arg477 lines the substrate pocket.

This sequence belongs to the transketolase family. As to quaternary structure, homodimer. It depends on Mg(2+) as a cofactor. Ca(2+) serves as cofactor. Mn(2+) is required as a cofactor. Requires Co(2+) as cofactor. The cofactor is thiamine diphosphate.

The catalysed reaction is D-sedoheptulose 7-phosphate + D-glyceraldehyde 3-phosphate = aldehydo-D-ribose 5-phosphate + D-xylulose 5-phosphate. Plays an essential role in total transketolase activity and cell proliferation in cancer cells; after transfection with anti-TKTL1 siRNA, total transketolase activity dramatically decreases and proliferation was significantly inhibited in cancer cells. Plays a pivotal role in carcinogenesis. The protein is Transketolase-like protein 2 (TKTL2) of Bos taurus (Bovine).